The chain runs to 219 residues: Translation initiation factor IF-3 (219 aa).

This sequence belongs to the IF-3 family. In terms of assembly, monomer.

Its subcellular location is the cytoplasm. Functionally, IF-3 binds to the 30S ribosomal subunit and shifts the equilibrium between 70S ribosomes and their 50S and 30S subunits in favor of the free subunits, thus enhancing the availability of 30S subunits on which protein synthesis initiation begins. In Prochlorococcus marinus (strain MIT 9313), this protein is Translation initiation factor IF-3.